The following is a 253-amino-acid chain: 5'-nucleotidase SurE (253 aa).

Residues D8, D9, S39, and N92 each contribute to the a divalent metal cation site.

Belongs to the SurE nucleotidase family. A divalent metal cation is required as a cofactor.

It localises to the cytoplasm. It carries out the reaction a ribonucleoside 5'-phosphate + H2O = a ribonucleoside + phosphate. Its function is as follows. Nucleotidase that shows phosphatase activity on nucleoside 5'-monophosphates. This Burkholderia thailandensis (strain ATCC 700388 / DSM 13276 / CCUG 48851 / CIP 106301 / E264) protein is 5'-nucleotidase SurE.